The primary structure comprises 114 residues: MPQRKLGKTGAHRKAMFRNMLTDFFRHGRIETTLPKAKELRSLAEKMITTAKTNDLSSRRKVLKYVKDKEVVKKLFDEIAPRYSERPGGYTRILKMYPRRGDAAEKAIIELVEE.

This sequence belongs to the bacterial ribosomal protein bL17 family. In terms of assembly, part of the 50S ribosomal subunit. Contacts protein L32.

The sequence is that of Large ribosomal subunit protein bL17 from Halothermothrix orenii (strain H 168 / OCM 544 / DSM 9562).